The chain runs to 381 residues: Prostatic acid phosphatase (381 aa).

Positions 1–31 (MRAVPLHLVGTASLTLGFLLLLSLRLDPGQA) are cleaved as a signal peptide. Arginine 42 serves as a coordination point for substrate. Histidine 43 (nucleophile) is an active-site residue. Residue arginine 46 participates in substrate binding. A glycan (N-linked (GlcNAc...) asparagine) is linked at asparagine 93. Arginine 110 contacts substrate. 3 cysteine pairs are disulfide-bonded: cysteine 160-cysteine 371, cysteine 214-cysteine 312, and cysteine 346-cysteine 350. A glycan (N-linked (GlcNAc...) asparagine) is linked at asparagine 219. A substrate-binding site is contributed by histidine 288. Aspartate 289 serves as the catalytic Proton donor. A glycan (N-linked (GlcNAc...) asparagine) is linked at asparagine 332.

The protein belongs to the histidine acid phosphatase family. Homodimer; dimer formation is required for phosphatase activity. N-glycosylated. In terms of tissue distribution, expressed in prostate epithelium. Also expressed in the pelvic nerve and sacral spinal cord. Localizes in peptidergic and non-peptidergic nociceptive (pain-sensing) neurons.

It localises to the secreted. Its subcellular location is the cell membrane. It is found in the lysosome membrane. It carries out the reaction a phosphate monoester + H2O = an alcohol + phosphate. The catalysed reaction is a ribonucleoside 5'-phosphate + H2O = a ribonucleoside + phosphate. The enzyme catalyses 1-(9Z-octadecenoyl)-sn-glycero-3-phosphate + H2O = 1-(9Z-octadecenoyl)-sn-glycerol + phosphate. It catalyses the reaction O-phospho-L-tyrosyl-[protein] + H2O = L-tyrosyl-[protein] + phosphate. Inhibited by L(+)-tartrate. A non-specific tyrosine phosphatase that dephosphorylates a diverse number of substrates under acidic conditions (pH 4-6) including alkyl, aryl, and acyl orthophosphate monoesters and phosphorylated proteins. Has lipid phosphatase activity and inactivates lysophosphatidic acid in seminal plasma. Its function is as follows. In addition to its tyrosine phosphatase activity, also has ecto-5'-nucleotidase activity in dorsal root ganglion (DRG) neurons. Generates adenosine from AMP. This extracellular adenosine leads to a decrease in chronic pain by activating A1R in nociceptive neurons. This chain is Prostatic acid phosphatase (Acp3), found in Rattus norvegicus (Rat).